A 118-amino-acid chain; its full sequence is Small ribosomal subunit protein uS12cz/uS12cy (118 aa).

This sequence belongs to the universal ribosomal protein uS12 family. In terms of assembly, part of the 30S ribosomal subunit.

The protein resides in the plastid. It is found in the chloroplast. Its function is as follows. With S4 and S5 plays an important role in translational accuracy. Located at the interface of the 30S and 50S subunits. This chain is Small ribosomal subunit protein uS12cz/uS12cy (rps12-A), found in Helianthus annuus (Common sunflower).